A 471-amino-acid polypeptide reads, in one-letter code: ATP synthase subunit beta (471 aa).

ATP is bound at residue 156–163 (GGAGVGKT).

It belongs to the ATPase alpha/beta chains family. As to quaternary structure, F-type ATPases have 2 components, CF(1) - the catalytic core - and CF(0) - the membrane proton channel. CF(1) has five subunits: alpha(3), beta(3), gamma(1), delta(1), epsilon(1). CF(0) has three main subunits: a(1), b(2) and c(9-12). The alpha and beta chains form an alternating ring which encloses part of the gamma chain. CF(1) is attached to CF(0) by a central stalk formed by the gamma and epsilon chains, while a peripheral stalk is formed by the delta and b chains.

It is found in the cell membrane. The enzyme catalyses ATP + H2O + 4 H(+)(in) = ADP + phosphate + 5 H(+)(out). Produces ATP from ADP in the presence of a proton gradient across the membrane. The catalytic sites are hosted primarily by the beta subunits. The chain is ATP synthase subunit beta from Staphylococcus carnosus (strain TM300).